An 89-amino-acid polypeptide reads, in one-letter code: Signal recognition particle 19 kDa protein (89 aa).

It belongs to the SRP19 family. Part of the signal recognition particle protein translocation system, which is composed of SRP and FtsY. Archaeal SRP consists of a 7S RNA molecule of 300 nucleotides and two protein subunits: SRP54 and SRP19.

The protein resides in the cytoplasm. Its function is as follows. Involved in targeting and insertion of nascent membrane proteins into the cytoplasmic membrane. Binds directly to 7S RNA and mediates binding of the 54 kDa subunit of the SRP. The protein is Signal recognition particle 19 kDa protein of Methanococcus maripaludis (strain C7 / ATCC BAA-1331).